A 479-amino-acid chain; its full sequence is Aspartyl/glutamyl-tRNA(Asn/Gln) amidotransferase subunit B (479 aa).

Belongs to the GatB/GatE family. GatB subfamily. Heterotrimer of A, B and C subunits.

The catalysed reaction is L-glutamyl-tRNA(Gln) + L-glutamine + ATP + H2O = L-glutaminyl-tRNA(Gln) + L-glutamate + ADP + phosphate + H(+). It catalyses the reaction L-aspartyl-tRNA(Asn) + L-glutamine + ATP + H2O = L-asparaginyl-tRNA(Asn) + L-glutamate + ADP + phosphate + 2 H(+). Its function is as follows. Allows the formation of correctly charged Asn-tRNA(Asn) or Gln-tRNA(Gln) through the transamidation of misacylated Asp-tRNA(Asn) or Glu-tRNA(Gln) in organisms which lack either or both of asparaginyl-tRNA or glutaminyl-tRNA synthetases. The reaction takes place in the presence of glutamine and ATP through an activated phospho-Asp-tRNA(Asn) or phospho-Glu-tRNA(Gln). The polypeptide is Aspartyl/glutamyl-tRNA(Asn/Gln) amidotransferase subunit B (Geotalea uraniireducens (strain Rf4) (Geobacter uraniireducens)).